Consider the following 133-residue polypeptide: Helix-loop-helix protein 1 (133 aa).

The tract at residues Met1–Ala79 is disordered. Gly residues predominate over residues Asp25–Ala45. Basic and acidic residues predominate over residues Glu52 to Glu65. Over residues Arg66–Ala79 the composition is skewed to basic residues. The bHLH domain maps to Lys75 to Leu127.

Efficient DNA binding requires dimerization with another bHLH protein.

The protein resides in the nucleus. Functionally, may serve as DNA-binding protein and may be involved in the control of cell-type determination, possibly within the developing nervous system. In Homo sapiens (Human), this protein is Helix-loop-helix protein 1 (NHLH1).